Here is a 635-residue protein sequence, read N- to C-terminus: Threonine--tRNA ligase (635 aa).

The region spanning 1 to 61 (MIAITLPDGS…DRDVALAIIT (61 aa)) is the TGS domain. Residues 242 to 533 (DHRKLGKSLD…LLENHAGALP (292 aa)) are catalytic. 3 residues coordinate Zn(2+): Cys-333, His-384, and His-510.

It belongs to the class-II aminoacyl-tRNA synthetase family. As to quaternary structure, homodimer. It depends on Zn(2+) as a cofactor.

Its subcellular location is the cytoplasm. The catalysed reaction is tRNA(Thr) + L-threonine + ATP = L-threonyl-tRNA(Thr) + AMP + diphosphate + H(+). Its function is as follows. Catalyzes the attachment of threonine to tRNA(Thr) in a two-step reaction: L-threonine is first activated by ATP to form Thr-AMP and then transferred to the acceptor end of tRNA(Thr). Also edits incorrectly charged L-seryl-tRNA(Thr). The protein is Threonine--tRNA ligase of Cupriavidus pinatubonensis (strain JMP 134 / LMG 1197) (Cupriavidus necator (strain JMP 134)).